We begin with the raw amino-acid sequence, 95 residues long: Protein TusB (95 aa).

This sequence belongs to the DsrH/TusB family. As to quaternary structure, heterohexamer, formed by a dimer of trimers. The hexameric TusBCD complex contains 2 copies each of TusB, TusC and TusD. The TusBCD complex interacts with TusE.

It localises to the cytoplasm. In terms of biological role, part of a sulfur-relay system required for 2-thiolation of 5-methylaminomethyl-2-thiouridine (mnm(5)s(2)U) at tRNA wobble positions. The polypeptide is Protein TusB (Pectobacterium parmentieri).